The sequence spans 200 residues: THO complex subunit tho5 (200 aa).

This sequence belongs to the THOC5 family. As to quaternary structure, component of the THO and TREX complexes.

It is found in the cytoplasm. The protein localises to the nucleus. In terms of biological role, component the THO subcomplex of the TREX complex, which operates in coupling transcription elongation to mRNA export. The THO complex is recruited to transcribed genes and moves along the gene with the elongating polymerase during transcription. THO is important for stabilizing nascent RNA in the RNA polymerase II elongation complex by preventing formation of DNA:RNA hybrids behind the elongating polymerase. The THO complex is also required to maintain TRAMP complex occupancy at sites of snoRNA transcription thus promoting exosome-mediated degradation of snoRNA precursors. The chain is THO complex subunit tho5 from Schizosaccharomyces pombe (strain 972 / ATCC 24843) (Fission yeast).